The chain runs to 351 residues: MQTYGNPDVTYGWWAGNSGVTNRSGKFIAAHAAHTGLIAFWAGAFTLFELARFDPSVPMGHQPLIALPHLATLGIGFDEAGTFVGGTTVTAIAIVHLVLSMVYGAGGLLHSLTFPGDMQDSEVLQARKFKLEWDNPDNQTFILGHHLIFLGVANIQFVEWARIHGIWDAAAGSIRQVEYNLNLSSIWNHQFDFLTINNLEDVMGGHAFLAFFMITGGAFHIATKQVGEYTKFKGSGLLSAEAILSWSLAGIGWMAIVAAFWCATNTTVYPVDFFGEVLDLKFGIAPYWVDTVDLPNGAHTSRAWLTNVHYFLGFFYIQGHLWHALRAMGFDFKRVSSAVSNIGTASVTLND.

Transmembrane regions (helical) follow at residues 27-47 (FIAA…AFTL), 64-84 (LIAL…GTFV), 89-109 (VTAI…GGLL), 202-222 (VMGG…FHIA), 242-262 (AILS…AFWC), and 305-325 (LTNV…WHAL).

Belongs to the PsbB/PsbC family. IsiA/Pcb subfamily. In terms of assembly, the antenna complex consists of divinyl chlorophylls (a and b) and divinyl chlorophyll a/b binding proteins and binds more divinyl chlorophyll b than does the antenna complex from high-light-adapted Prochlorococcus. Requires divinyl chlorophyll a as cofactor. Divinyl chlorophyll b is required as a cofactor.

It localises to the cellular thylakoid membrane. The antenna complex functions as a light receptor, it captures and delivers excitation energy to photosystems II and I. The Prochlorales pcb genes are not related to higher plant LHCs. This chain is Divinyl chlorophyll a/b light-harvesting protein PcbA (pcbA), found in Prochlorococcus marinus (strain SARG / CCMP1375 / SS120).